A 269-amino-acid polypeptide reads, in one-letter code: 4-hydroxy-tetrahydrodipicolinate reductase (269 aa).

NAD(+) is bound by residues 8–13 (GAAGRM) and E34. R35 provides a ligand contact to NADP(+). Residues 98-100 (GTT) and 122-125 (APNY) contribute to the NAD(+) site. The Proton donor/acceptor role is filled by H155. Position 156 (H156) interacts with (S)-2,3,4,5-tetrahydrodipicolinate. The active-site Proton donor is the K159. 165 to 166 (GT) is a binding site for (S)-2,3,4,5-tetrahydrodipicolinate.

Belongs to the DapB family.

The protein resides in the cytoplasm. It catalyses the reaction (S)-2,3,4,5-tetrahydrodipicolinate + NAD(+) + H2O = (2S,4S)-4-hydroxy-2,3,4,5-tetrahydrodipicolinate + NADH + H(+). It carries out the reaction (S)-2,3,4,5-tetrahydrodipicolinate + NADP(+) + H2O = (2S,4S)-4-hydroxy-2,3,4,5-tetrahydrodipicolinate + NADPH + H(+). It participates in amino-acid biosynthesis; L-lysine biosynthesis via DAP pathway; (S)-tetrahydrodipicolinate from L-aspartate: step 4/4. Catalyzes the conversion of 4-hydroxy-tetrahydrodipicolinate (HTPA) to tetrahydrodipicolinate. This Vibrio cholerae serotype O1 (strain ATCC 39541 / Classical Ogawa 395 / O395) protein is 4-hydroxy-tetrahydrodipicolinate reductase.